The primary structure comprises 338 residues: Phenylalanine--tRNA ligase alpha subunit (338 aa).

Glu252 provides a ligand contact to Mg(2+).

Belongs to the class-II aminoacyl-tRNA synthetase family. Phe-tRNA synthetase alpha subunit type 1 subfamily. Tetramer of two alpha and two beta subunits. Requires Mg(2+) as cofactor.

It is found in the cytoplasm. The enzyme catalyses tRNA(Phe) + L-phenylalanine + ATP = L-phenylalanyl-tRNA(Phe) + AMP + diphosphate + H(+). The polypeptide is Phenylalanine--tRNA ligase alpha subunit (Pseudomonas entomophila (strain L48)).